The chain runs to 1374 residues: DNA-directed RNA polymerase subunit beta (1374 aa).

Belongs to the RNA polymerase beta chain family. As to quaternary structure, the RNAP catalytic core consists of 2 alpha, 1 beta, 1 beta' and 1 omega subunit. When a sigma factor is associated with the core the holoenzyme is formed, which can initiate transcription.

The enzyme catalyses RNA(n) + a ribonucleoside 5'-triphosphate = RNA(n+1) + diphosphate. Its function is as follows. DNA-dependent RNA polymerase catalyzes the transcription of DNA into RNA using the four ribonucleoside triphosphates as substrates. This is DNA-directed RNA polymerase subunit beta from Acidovorax ebreus (strain TPSY) (Diaphorobacter sp. (strain TPSY)).